Here is a 346-residue protein sequence, read N- to C-terminus: Phenylalanine--tRNA ligase alpha subunit (346 aa).

Glu264 contributes to the Mg(2+) binding site.

The protein belongs to the class-II aminoacyl-tRNA synthetase family. Phe-tRNA synthetase alpha subunit type 1 subfamily. As to quaternary structure, tetramer of two alpha and two beta subunits. The cofactor is Mg(2+).

The protein resides in the cytoplasm. It catalyses the reaction tRNA(Phe) + L-phenylalanine + ATP = L-phenylalanyl-tRNA(Phe) + AMP + diphosphate + H(+). The chain is Phenylalanine--tRNA ligase alpha subunit from Leifsonia xyli subsp. xyli (strain CTCB07).